We begin with the raw amino-acid sequence, 338 residues long: tRNA N6-adenosine threonylcarbamoyltransferase (338 aa).

Positions 110 and 114 each coordinate Fe cation. Substrate-binding positions include 132–136 (LLSGG), Asp-165, Gly-178, and Asn-274. Asp-298 is a binding site for Fe cation.

It belongs to the KAE1 / TsaD family. Fe(2+) is required as a cofactor.

It localises to the cytoplasm. It carries out the reaction L-threonylcarbamoyladenylate + adenosine(37) in tRNA = N(6)-L-threonylcarbamoyladenosine(37) in tRNA + AMP + H(+). Required for the formation of a threonylcarbamoyl group on adenosine at position 37 (t(6)A37) in tRNAs that read codons beginning with adenine. Is involved in the transfer of the threonylcarbamoyl moiety of threonylcarbamoyl-AMP (TC-AMP) to the N6 group of A37, together with TsaE and TsaB. TsaD likely plays a direct catalytic role in this reaction. The protein is tRNA N6-adenosine threonylcarbamoyltransferase of Borrelia garinii subsp. bavariensis (strain ATCC BAA-2496 / DSM 23469 / PBi) (Borreliella bavariensis).